Here is a 674-residue protein sequence, read N- to C-terminus: DNA ligase (674 aa).

NAD(+)-binding positions include aspartate 34 to aspartate 38, serine 84 to leucine 85, and glutamate 116. The active-site N6-AMP-lysine intermediate is lysine 118. Arginine 139, glutamate 174, lysine 291, and lysine 315 together coordinate NAD(+). Zn(2+) contacts are provided by cysteine 409, cysteine 412, cysteine 425, and cysteine 430. Positions arginine 586 to serine 674 constitute a BRCT domain.

The protein belongs to the NAD-dependent DNA ligase family. LigA subfamily. Mg(2+) is required as a cofactor. Requires Mn(2+) as cofactor.

The catalysed reaction is NAD(+) + (deoxyribonucleotide)n-3'-hydroxyl + 5'-phospho-(deoxyribonucleotide)m = (deoxyribonucleotide)n+m + AMP + beta-nicotinamide D-nucleotide.. Functionally, DNA ligase that catalyzes the formation of phosphodiester linkages between 5'-phosphoryl and 3'-hydroxyl groups in double-stranded DNA using NAD as a coenzyme and as the energy source for the reaction. It is essential for DNA replication and repair of damaged DNA. In Thermus scotoductus, this protein is DNA ligase.